We begin with the raw amino-acid sequence, 346 residues long: Golgi-associated RAB2 interactor protein 2 (346 aa).

The tract at residues 275 to 346 is disordered; the sequence is TPVESEANTS…EKHVRQPKDF (72 aa). Composition is skewed to basic and acidic residues over residues 283 to 297 and 334 to 346; these read TSKE…EKTP and KLVE…PKDF.

This sequence belongs to the GARIN family. Interacts with CALM1.

It localises to the cell projection. The protein resides in the cilium. It is found in the flagellum. Functionally, seems to play a role in sperm motility. The sequence is that of Golgi-associated RAB2 interactor protein 2 (GARIN2) from Macaca fascicularis (Crab-eating macaque).